We begin with the raw amino-acid sequence, 120 residues long: Ribonuclease P protein component (120 aa).

Belongs to the RnpA family. As to quaternary structure, consists of a catalytic RNA component (M1 or rnpB) and a protein subunit.

It carries out the reaction Endonucleolytic cleavage of RNA, removing 5'-extranucleotides from tRNA precursor.. RNaseP catalyzes the removal of the 5'-leader sequence from pre-tRNA to produce the mature 5'-terminus. It can also cleave other RNA substrates such as 4.5S RNA. The protein component plays an auxiliary but essential role in vivo by binding to the 5'-leader sequence and broadening the substrate specificity of the ribozyme. The sequence is that of Ribonuclease P protein component from Azoarcus sp. (strain BH72).